The following is a 481-amino-acid chain: MASLDISDPDITKYIKLVQDGNPANRWIVFSYVPKSNNKIKFCDSGSGDLKELREELDDSSIRFAYIRFVINNMPKFVYIPWCGDGVNGPIKGAFSGHAIEFSKSFKPIHHQVNARSEEDIDEKAITAALNKATGASYDSGSKVQGATKGTFIPQSVSQGREAATKSNAEVKNVINKNDYNKIQESAEYWKQNQANKSEPAKPTRPEYNLSTERDDYWKQQQAEKQKQQQQQQQQQASRVNAPPPSRTVGNKFQEQVSKPTETAPPQPRPAPSKGSVLNRFPAATQQQQEPPAPSRPAAPVPSRVNKPAAPVQPVYQEPVHEEPQYEEPQYEEEQQQQYEEQPTEEQQYYQEEPQQQYEEQPTEEQQYYQEEQQQYEEQPTEEQQYYQEEQQQYEQPTEDQQYYQEEQQQYEQPAEEQYDQSGYLQAKALYDYNGENDGDLSFREGDIITILDQSDPDGWWQGSLPTGEQGFFPSNFVQQL.

The ADF-H domain maps to 3–131; sequence SLDISDPDIT…DEKAITAALN (129 aa). Positions 217 to 227 are enriched in basic and acidic residues; the sequence is YWKQQQAEKQK. The tract at residues 217-423 is disordered; sequence YWKQQQAEKQ…PAEEQYDQSG (207 aa). Low complexity predominate over residues 228–237; it reads QQQQQQQQQA. Polar residues predominate over residues 248-261; sequence TVGNKFQEQVSKPT. Over residues 291–300 the composition is skewed to pro residues; the sequence is PPAPSRPAAP. The span at 325-335 shows a compositional bias: acidic residues; it reads QYEEPQYEEEQ. The segment covering 336-413 has biased composition (low complexity); it reads QQQYEEQPTE…YQEEQQQYEQ (78 aa). In terms of domain architecture, SH3 spans 422 to 481; the sequence is SGYLQAKALYDYNGENDGDLSFREGDIITILDQSDPDGWWQGSLPTGEQGFFPSNFVQQL.

The protein belongs to the ABP1 family.

It is found in the cytoplasm. The protein localises to the cytoskeleton. Its subcellular location is the cell projection. The protein resides in the pseudopodium. In terms of biological role, actin-binding adapter protein. Binds to F-actin but is not involved in actin polymerization, capping or bundling. Does not bind G-actin. Controls pseudopodium number and motility in early stages of chemotactic aggregation. This Dictyostelium discoideum (Social amoeba) protein is Drebrin-like protein (abpE-1).